The chain runs to 247 residues: MAGHSKFKNIMHRKGAQDKKRSALFSKLSREITVAARMGLPDPAMNARLRQAVITARKEGLPKDNIERSINKAAGGDGANYEEIRYEGFGPGGVALIIEALTDNRNRTATNVRTIVSKNGGNLGAGGSVSHGFDRLGLISYGLAAGDAEKVFEAALEAGADDVSSSEDGHEIWTAQDALHEVAKALEPVLGEPDGAKLAWRPQTQVTVGEDDAAKLLKLIDALDDDDDVQTVWGNYDVPEEVMAKLG.

The span at 1-14 shows a compositional bias: basic residues; sequence MAGHSKFKNIMHRK. Positions 1–21 are disordered; sequence MAGHSKFKNIMHRKGAQDKKR.

It belongs to the TACO1 family.

It is found in the cytoplasm. The protein is Probable transcriptional regulatory protein Swit_2142 of Rhizorhabdus wittichii (strain DSM 6014 / CCUG 31198 / JCM 15750 / NBRC 105917 / EY 4224 / RW1) (Sphingomonas wittichii).